The chain runs to 434 residues: Nicotinate phosphoribosyltransferase (434 aa).

Histidine 242 carries the phosphohistidine; by autocatalysis modification.

The protein belongs to the NAPRTase family. Transiently phosphorylated on a His residue during the reaction cycle. Phosphorylation strongly increases the affinity for substrates and increases the rate of nicotinate D-ribonucleotide production. Dephosphorylation regenerates the low-affinity form of the enzyme, leading to product release.

It catalyses the reaction nicotinate + 5-phospho-alpha-D-ribose 1-diphosphate + ATP + H2O = nicotinate beta-D-ribonucleotide + ADP + phosphate + diphosphate. It functions in the pathway cofactor biosynthesis; NAD(+) biosynthesis; nicotinate D-ribonucleotide from nicotinate: step 1/1. Catalyzes the synthesis of beta-nicotinate D-ribonucleotide from nicotinate and 5-phospho-D-ribose 1-phosphate at the expense of ATP. The chain is Nicotinate phosphoribosyltransferase from Chelativorans sp. (strain BNC1).